The chain runs to 338 residues: Probable tRNA pseudouridine synthase B (338 aa).

The active-site Nucleophile is Asp78. The region spanning 245-320 (LPKIILRDSA…IAASPIRVLM (76 aa)) is the PUA domain.

It belongs to the pseudouridine synthase TruB family. Type 2 subfamily.

It catalyses the reaction uridine(55) in tRNA = pseudouridine(55) in tRNA. Its function is as follows. Could be responsible for synthesis of pseudouridine from uracil-55 in the psi GC loop of transfer RNAs. This chain is Probable tRNA pseudouridine synthase B, found in Methanosarcina mazei (strain ATCC BAA-159 / DSM 3647 / Goe1 / Go1 / JCM 11833 / OCM 88) (Methanosarcina frisia).